We begin with the raw amino-acid sequence, 78 residues long: Acyl carrier protein (78 aa).

One can recognise a Carrier domain in the interval 2 to 77 (SDVLERVSKI…DAVKFISEKV (76 aa)). Position 37 is an O-(pantetheine 4'-phosphoryl)serine (Ser-37).

Belongs to the acyl carrier protein (ACP) family. Post-translationally, 4'-phosphopantetheine is transferred from CoA to a specific serine of apo-ACP by AcpS. This modification is essential for activity because fatty acids are bound in thioester linkage to the sulfhydryl of the prosthetic group.

Its subcellular location is the cytoplasm. Its pathway is lipid metabolism; fatty acid biosynthesis. Carrier of the growing fatty acid chain in fatty acid biosynthesis. This is Acyl carrier protein from Maricaulis maris (strain MCS10) (Caulobacter maris).